The chain runs to 436 residues: Serine hydroxymethyltransferase (436 aa).

Residues Leu-133 and 137 to 139 contribute to the (6S)-5,6,7,8-tetrahydrofolate site; that span reads GHI. Lys-242 is subject to N6-(pyridoxal phosphate)lysine.

Belongs to the SHMT family. In terms of assembly, homodimer. Pyridoxal 5'-phosphate serves as cofactor.

It is found in the cytoplasm. It catalyses the reaction (6R)-5,10-methylene-5,6,7,8-tetrahydrofolate + glycine + H2O = (6S)-5,6,7,8-tetrahydrofolate + L-serine. The protein operates within one-carbon metabolism; tetrahydrofolate interconversion. Its pathway is amino-acid biosynthesis; glycine biosynthesis; glycine from L-serine: step 1/1. Functionally, catalyzes the reversible interconversion of serine and glycine with tetrahydrofolate (THF) serving as the one-carbon carrier. This reaction serves as the major source of one-carbon groups required for the biosynthesis of purines, thymidylate, methionine, and other important biomolecules. Also exhibits THF-independent aldolase activity toward beta-hydroxyamino acids, producing glycine and aldehydes, via a retro-aldol mechanism. In Pelagibacter ubique (strain HTCC1062), this protein is Serine hydroxymethyltransferase.